The sequence spans 207 residues: ATP-dependent Clp protease proteolytic subunit (207 aa).

The propeptide occupies 1-14; the sequence is MSYSGERDNLAPHM. Ser-111 acts as the Nucleophile in catalysis. Residue His-136 is part of the active site.

It belongs to the peptidase S14 family. In terms of assembly, fourteen ClpP subunits assemble into 2 heptameric rings which stack back to back to give a disk-like structure with a central cavity, resembling the structure of eukaryotic proteasomes. Component of the ClpAP and ClpXP complexes.

It is found in the cytoplasm. It catalyses the reaction Hydrolysis of proteins to small peptides in the presence of ATP and magnesium. alpha-casein is the usual test substrate. In the absence of ATP, only oligopeptides shorter than five residues are hydrolyzed (such as succinyl-Leu-Tyr-|-NHMec, and Leu-Tyr-Leu-|-Tyr-Trp, in which cleavage of the -Tyr-|-Leu- and -Tyr-|-Trp bonds also occurs).. Cleaves peptides in various proteins in a process that requires ATP hydrolysis. Has a chymotrypsin-like activity. Plays a major role in the degradation of misfolded proteins. The sequence is that of ATP-dependent Clp protease proteolytic subunit from Salmonella paratyphi A (strain ATCC 9150 / SARB42).